A 445-amino-acid polypeptide reads, in one-letter code: UPF0210 protein llmg_1581 (445 aa).

The protein belongs to the UPF0210 family. In terms of assembly, homodimer.

This is UPF0210 protein llmg_1581 from Lactococcus lactis subsp. cremoris (strain MG1363).